Reading from the N-terminus, the 181-residue chain is Oligoribonuclease (181 aa).

The Exonuclease domain occupies 8–171; it reads LVWIDMEMTG…DDIRESIAEL (164 aa). The active site involves Y129.

Belongs to the oligoribonuclease family.

It is found in the cytoplasm. 3'-to-5' exoribonuclease specific for small oligoribonucleotides. This Aeromonas hydrophila subsp. hydrophila (strain ATCC 7966 / DSM 30187 / BCRC 13018 / CCUG 14551 / JCM 1027 / KCTC 2358 / NCIMB 9240 / NCTC 8049) protein is Oligoribonuclease.